The primary structure comprises 671 residues: MARLTKVYNTDDDDSGYVGRRNLPLVAGDKLMMLMDLNSKGLVIDSPLIRGRELEEFSRKFKLLTEAERRQSLEIDSASFMEVLNQCVQCVGCRRRVERLFHQLTETGHRTLDPLELRPTATLGIVEEKLKTPQALGTLLYRHHEVLNNLLDNKLRNKTRCVLHSLDAFRAKPFSETWREVWSAMKSNCRNELTIIETKELHDVLENYLKKHKFCSGCRTKIERAYKILIGEISSKEKGYAAQLYAHIRKCVPDQHIHVTTNKIEFLDALIKRAEPEVNGSYSKLRERHAKTLEIAQEEVLTCVGMIMYERLRRIYVSLREEERACQVLAAVGVHALCRSFDTFVEQKQGISNLELLYQEISRAERAKQIKREQKKLKKKKKKDEKKNLLHRQCDDTEANESDEEEEELRNEELDLEEESQMQHEELSDPGADDGIVIEAARSPEPEPELTSKPTKSKPKKQSKKKKQKKAAFTKMGNQKQMQATARVQPLDADHDQLDVASCISSSIAKTVGDKCEECLASMPNCPCEQDVRDSGYGSDPPSHAGSRTSSAISSPEGSEVSCSDGLCNHDVHDEDSDDLLFYSHQSQLDHKFSLLQMWDDFDEYDDKDEETYYIPQEVVMAFKCHREQVQRKREELRAKLRANFERLCVQHGVQTQVQKSKRTTSALVGQ.

Disordered regions lie at residues 372-489 and 532-562; these read REQK…ARVQ and VRDS…SEVS. The span at 373 to 384 shows a compositional bias: basic residues; it reads EQKKLKKKKKKD. A compositionally biased stretch (basic and acidic residues) spans 385–395; that stretch reads EKKNLLHRQCD. The span at 396–420 shows a compositional bias: acidic residues; the sequence is DTEANESDEEEEELRNEELDLEEES. Residues 455–472 are compositionally biased toward basic residues; sequence TKSKPKKQSKKKKQKKAA. Polar residues-rich tracts occupy residues 476–486 and 546–557; these read MGNQKQMQATA and GSRTSSAISSPE.

The chain is Gametogenetin-binding protein 2-like from Drosophila melanogaster (Fruit fly).